A 277-amino-acid polypeptide reads, in one-letter code: 3-methyl-2-oxobutanoate hydroxymethyltransferase (277 aa).

2 residues coordinate Mg(2+): aspartate 42 and aspartate 81. 3-methyl-2-oxobutanoate-binding positions include 42–43, aspartate 81, and lysine 110; that span reads DS. Glutamate 112 serves as a coordination point for Mg(2+). Glutamate 179 acts as the Proton acceptor in catalysis.

This sequence belongs to the PanB family. As to quaternary structure, homodecamer; pentamer of dimers. Requires Mg(2+) as cofactor.

It localises to the cytoplasm. The catalysed reaction is 3-methyl-2-oxobutanoate + (6R)-5,10-methylene-5,6,7,8-tetrahydrofolate + H2O = 2-dehydropantoate + (6S)-5,6,7,8-tetrahydrofolate. It functions in the pathway cofactor biosynthesis; (R)-pantothenate biosynthesis; (R)-pantoate from 3-methyl-2-oxobutanoate: step 1/2. Its function is as follows. Catalyzes the reversible reaction in which hydroxymethyl group from 5,10-methylenetetrahydrofolate is transferred onto alpha-ketoisovalerate to form ketopantoate. The sequence is that of 3-methyl-2-oxobutanoate hydroxymethyltransferase from Anaplasma marginale (strain Florida).